The primary structure comprises 240 residues: UDP-2,3-diacylglucosamine hydrolase (240 aa).

Mn(2+) is bound by residues Asp8, His10, Asp41, Asn79, and His114. 79-80 (NR) is a substrate binding site. 5 residues coordinate substrate: Asp122, Ser160, Asn164, Lys167, and His195. His195 and His197 together coordinate Mn(2+).

This sequence belongs to the LpxH family. It depends on Mn(2+) as a cofactor.

The protein localises to the cell inner membrane. The enzyme catalyses UDP-2-N,3-O-bis[(3R)-3-hydroxytetradecanoyl]-alpha-D-glucosamine + H2O = 2-N,3-O-bis[(3R)-3-hydroxytetradecanoyl]-alpha-D-glucosaminyl 1-phosphate + UMP + 2 H(+). It functions in the pathway glycolipid biosynthesis; lipid IV(A) biosynthesis; lipid IV(A) from (3R)-3-hydroxytetradecanoyl-[acyl-carrier-protein] and UDP-N-acetyl-alpha-D-glucosamine: step 4/6. Hydrolyzes the pyrophosphate bond of UDP-2,3-diacylglucosamine to yield 2,3-diacylglucosamine 1-phosphate (lipid X) and UMP by catalyzing the attack of water at the alpha-P atom. Involved in the biosynthesis of lipid A, a phosphorylated glycolipid that anchors the lipopolysaccharide to the outer membrane of the cell. This chain is UDP-2,3-diacylglucosamine hydrolase, found in Yersinia pseudotuberculosis serotype O:1b (strain IP 31758).